We begin with the raw amino-acid sequence, 164 residues long: Large ribosomal subunit protein eL24 (164 aa).

Disordered stretches follow at residues Lys63–Ser82 and Glu117–Ala164. A compositionally biased stretch (basic residues) spans Lys71 to Tyr81. A compositionally biased stretch (basic and acidic residues) spans Glu117–Val133.

This sequence belongs to the eukaryotic ribosomal protein eL24 family.

Its subcellular location is the cytoplasm. This chain is Large ribosomal subunit protein eL24 (RPL24), found in Cicer arietinum (Chickpea).